We begin with the raw amino-acid sequence, 426 residues long: Adenylosuccinate synthetase (426 aa).

GTP-binding positions include G12 to K18 and G40 to T42. Catalysis depends on D13, which acts as the Proton acceptor. Mg(2+) contacts are provided by D13 and G40. IMP contacts are provided by residues D13 to K16, N38 to H41, T131, R145, Q226, T241, and R305. The active-site Proton donor is the H41. A301 to R307 lines the substrate pocket. GTP-binding positions include R307, K333 to D335, and S415 to G417.

Belongs to the adenylosuccinate synthetase family. In terms of assembly, homodimer. The cofactor is Mg(2+).

Its subcellular location is the cytoplasm. It catalyses the reaction IMP + L-aspartate + GTP = N(6)-(1,2-dicarboxyethyl)-AMP + GDP + phosphate + 2 H(+). It participates in purine metabolism; AMP biosynthesis via de novo pathway; AMP from IMP: step 1/2. Its function is as follows. Plays an important role in the de novo pathway of purine nucleotide biosynthesis. Catalyzes the first committed step in the biosynthesis of AMP from IMP. In Nitratidesulfovibrio vulgaris (strain DP4) (Desulfovibrio vulgaris), this protein is Adenylosuccinate synthetase.